The chain runs to 232 residues: MAQEIVWYGAGAGAFFVSAVVFVWFAATRGNIRSSFYYLPPIHTSVAGAAYVAMALIAGGQLGDTVSITTLRFADWIVSTPIITYYLARLAGVDTQTRRLAVAANVVMIGVGYGFVSMSGSLRWIAFAVSTVAFIGLLYLYIKTFARKINAATASVRSLFQSLRDLTVVTWSLYPVVYFLGPLGTGIIQAPDLNFLVAVLDTIAKVGFMSILLVRYNSVETFVDSWSVAPAK.

7 helical membrane passes run 5–25 (IVWYGAGAGAFFVSAVVFVWF), 39–59 (LPPIHTSVAGAAYVAMALIAG), 73–93 (FADWIVSTPIITYYLARLAGV), 100–120 (LAVAANVVMIGVGYGFVSMSG), 125–145 (IAFAVSTVAFIGLLYLYIKTF), 168–188 (VVTWSLYPVVYFLGPLGTGII), and 194–214 (NFLVAVLDTIAKVGFMSILLV). At Lys205 the chain carries N6-(retinylidene)lysine.

This sequence belongs to the archaeal/bacterial/fungal opsin family. In terms of assembly, interacts with HtrM. Post-translationally, the covalent binding of retinal to the apoprotein, bacterioopsin, generates bacteriorhodopsin.

It localises to the membrane. In terms of biological role, sensory rhodopsin. Associates with an unusual transducer lacking a methyl-accepting transducer domain found in all other photosensory transducers. The chromophore is all-trans-retinal in the dark. The polypeptide is Sensory rhodopsin III (xop2) (Haloarcula marismortui (strain ATCC 43049 / DSM 3752 / JCM 8966 / VKM B-1809) (Halobacterium marismortui)).